A 561-amino-acid chain; its full sequence is MLSRISERCTAVTGLEQVLCRHVWSAAWLRDAEPAAAASQSIDLSCLMERAGLAAYDVFASLYASQRHWLILVGSGNNGGDGYVIARHAREAGRKVTVLSMPHSKPLPTEATNAQHAWQAVGGTETMINPGTSLHLPTDVDLVVDGLLGTGISGPPREHYEEVIRHINALPVPRVAIDIPSGLNAETGEAAGACVKADHTATFICLKPGLLTGQARDYVGQLHYRSLGLEEWMIAAERMDAALCRRVALGDVYGYFSTRRSAVAHKGSCGKVVLIGGDHGFGGAILMSAEACLTIGAGLTRVLTRPEYVAPLLTRCPEVMVTAVETETSGQLEQQMVEAFEWASTLAVGPGLGTGAYGQAALSAALQQAEMHQDKTLVLDADALNLLAERLHSKEMGAAVGAGKYLPVLPNSIITPHPGEAARLLACRVADVEKDRLAAARRLAAILGGTCLLKGPGTVVHCQSSGKTAIVDAGNAGMASGGMGDVLTGLLAGLAAQRMMHDTFDTTCAAALVHGVAADMVAAEDGRGTRGIRATELIPRIPFIVNASVPSSATQQRPSGL.

Residues 1-241 (MLSRISERCT…WMIAAERMDA (241 aa)) are NAD(P)H-hydrate epimerase. In terms of domain architecture, YjeF N-terminal spans 29–235 (LRDAEPAAAA…SLGLEEWMIA (207 aa)). The interval 77–81 (NNGGD) is NADPHX 1; for epimerase activity. Positions 78 and 145 each coordinate K(+). Positions 149–155 (GTGISGP) are NADPHX 1; for epimerase activity. Tyr-160 and Asp-178 together coordinate (6S)-NADPHX. Ser-181 serves as a coordination point for K(+). Residues 249–548 (LGDVYGYFST…PRIPFIVNAS (300 aa)) enclose the YjeF C-terminal domain. The interval 249 to 561 (LGDVYGYFST…SATQQRPSGL (313 aa)) is ADP-dependent (S)-NAD(P)H-hydrate dehydratase. (6S)-NADPHX is bound at residue Gly-351. Residues 417–423 (HPGEAAR) are NADPHX 2; for dehydratase activity. ADP-binding positions include 454 to 458 (KGPGT) and 475 to 484 (NAGMASGGMG). Position 485 (Asp-485) interacts with (6S)-NADPHX.

In the N-terminal section; belongs to the NnrE/AIBP family. The protein in the C-terminal section; belongs to the NnrD/CARKD family. K(+) serves as cofactor.

It catalyses the reaction (6S)-NADHX + ADP = AMP + phosphate + NADH + H(+). The enzyme catalyses (6S)-NADPHX + ADP = AMP + phosphate + NADPH + H(+). It carries out the reaction (6R)-NADHX = (6S)-NADHX. The catalysed reaction is (6R)-NADPHX = (6S)-NADPHX. Functionally, bifunctional enzyme that catalyzes the epimerization of the S- and R-forms of NAD(P)HX and the dehydration of the S-form of NAD(P)HX at the expense of ADP, which is converted to AMP. This allows the repair of both epimers of NAD(P)HX, a damaged form of NAD(P)H that is a result of enzymatic or heat-dependent hydration. The sequence is that of Bifunctional NAD(P)H-hydrate repair enzyme from Leishmania braziliensis.